Here is a 159-residue protein sequence, read N- to C-terminus: Elicitor-responsive protein 1 (159 aa).

In terms of domain architecture, C2 spans 1–112 (MAGSGVLEVH…SLGMEHGTWE (112 aa)). Residues Asp-21 and Asp-30 each contribute to the Ca(2+) site. Position 44 is a phosphoserine; by CPK (Ser-44). Residues Asp-81, Asp-83, Ser-86, and Asp-89 each contribute to the Ca(2+) site.

The cofactor is Ca(2+). Phosphorylated at Ser-44 by CPK18 in a calcium-dependent manner. As to expression, isoform 2 is expressed in young vascular tissues and tiller buds.

The protein localises to the cytoplasm. The protein resides in the cell membrane. Functionally, may play a role in plant defense signaling. Isoform 2 binds to phospholipids in a Ca(2+)-dependent manner in response to pathogen elicitors. This is Elicitor-responsive protein 1 (ERG1) from Oryza sativa subsp. japonica (Rice).